Consider the following 198-residue polypeptide: Recombination protein RecR (198 aa).

The C4-type zinc-finger motif lies at 57-72; it reads CSVCGRLTDDDPCSIC. One can recognise a Toprim domain in the interval 80-175; sequence TTILVLEDSR…KVTRLARGLA (96 aa).

The protein belongs to the RecR family.

Its function is as follows. May play a role in DNA repair. It seems to be involved in an RecBC-independent recombinational process of DNA repair. It may act with RecF and RecO. This chain is Recombination protein RecR, found in Streptococcus pneumoniae (strain Hungary19A-6).